The chain runs to 139 residues: ATP synthase epsilon chain (139 aa).

Belongs to the ATPase epsilon chain family. F-type ATPases have 2 components, CF(1) - the catalytic core - and CF(0) - the membrane proton channel. CF(1) has five subunits: alpha(3), beta(3), gamma(1), delta(1), epsilon(1). CF(0) has three main subunits: a, b and c.

The protein localises to the cell inner membrane. Its function is as follows. Produces ATP from ADP in the presence of a proton gradient across the membrane. The protein is ATP synthase epsilon chain of Pseudomonas putida (strain GB-1).